The sequence spans 490 residues: Mitochondria-eating protein (490 aa).

Residues 112 to 210 (IRELSSVHES…RILRDEVSFL (99 aa)) are a coiled coil. Low complexity-rich tracts occupy residues 224–241 (SRSP…SPVR) and 456–490 (RSSS…SSRL). 2 disordered regions span residues 224-253 (SRSP…LTSS) and 455-490 (SRSS…SSRL).

The protein belongs to the MIEAP family.

The protein resides in the cytoplasm. The protein localises to the mitochondrion outer membrane. Its subcellular location is the mitochondrion matrix. Functionally, key regulator of mitochondrial quality that mediates the repairing or degradation of unhealthy mitochondria in response to mitochondrial damage. Mediator of mitochondrial protein catabolic process (also named MALM) by mediating the degradation of damaged proteins inside mitochondria by promoting the accumulation in the mitochondrial matrix of hydrolases that are characteristic of the lysosomal lumen. Also involved in mitochondrion degradation of damaged mitochondria by promoting the formation of vacuole-like structures (named MIV), which engulf and degrade unhealthy mitochondria by accumulating lysosomes. Binds cardiolipin. May form molecular condensates (non-membrane-bounded organelles) within mitochondria that compartmentalize and promote cardiolipin metabolism. This chain is Mitochondria-eating protein (spata18), found in Danio rerio (Zebrafish).